The primary structure comprises 615 residues: Dihydroxy-acid dehydratase (615 aa).

Asp81 provides a ligand contact to Mg(2+). Residue Cys122 participates in [2Fe-2S] cluster binding. Asp123 and Lys124 together coordinate Mg(2+). Lys124 carries the post-translational modification N6-carboxylysine. Residue Cys195 coordinates [2Fe-2S] cluster. Mg(2+) is bound at residue Glu491. Ser517 serves as the catalytic Proton acceptor.

Belongs to the IlvD/Edd family. In terms of assembly, homodimer. The cofactor is [2Fe-2S] cluster. It depends on Mg(2+) as a cofactor.

The enzyme catalyses (2R)-2,3-dihydroxy-3-methylbutanoate = 3-methyl-2-oxobutanoate + H2O. It carries out the reaction (2R,3R)-2,3-dihydroxy-3-methylpentanoate = (S)-3-methyl-2-oxopentanoate + H2O. It functions in the pathway amino-acid biosynthesis; L-isoleucine biosynthesis; L-isoleucine from 2-oxobutanoate: step 3/4. It participates in amino-acid biosynthesis; L-valine biosynthesis; L-valine from pyruvate: step 3/4. Its function is as follows. Functions in the biosynthesis of branched-chain amino acids. Catalyzes the dehydration of (2R,3R)-2,3-dihydroxy-3-methylpentanoate (2,3-dihydroxy-3-methylvalerate) into 2-oxo-3-methylpentanoate (2-oxo-3-methylvalerate) and of (2R)-2,3-dihydroxy-3-methylbutanoate (2,3-dihydroxyisovalerate) into 2-oxo-3-methylbutanoate (2-oxoisovalerate), the penultimate precursor to L-isoleucine and L-valine, respectively. The polypeptide is Dihydroxy-acid dehydratase (Novosphingobium aromaticivorans (strain ATCC 700278 / DSM 12444 / CCUG 56034 / CIP 105152 / NBRC 16084 / F199)).